We begin with the raw amino-acid sequence, 112 residues long: Cell cycle protein GpsB (112 aa).

The stretch at 38-72 forms a coiled coil; sequence IKDYEAFHKEFEQLKQQNARLKRELEEQKLVATQV.

This sequence belongs to the GpsB family. As to quaternary structure, forms polymers through the coiled coil domains. Interacts with PBP1, MreC and EzrA.

The protein localises to the cytoplasm. In terms of biological role, divisome component that associates with the complex late in its assembly, after the Z-ring is formed, and is dependent on DivIC and PBP2B for its recruitment to the divisome. Together with EzrA, is a key component of the system that regulates PBP1 localization during cell cycle progression. Its main role could be the removal of PBP1 from the cell pole after pole maturation is completed. Also contributes to the recruitment of PBP1 to the division complex. Not essential for septum formation. This Bacillus cereus (strain ZK / E33L) protein is Cell cycle protein GpsB.